The chain runs to 1103 residues: Platelet-derived growth factor receptor beta (1103 aa).

The signal sequence occupies residues Met-1–Gly-31. Ig-like C2-type domains lie at Leu-33–Val-120, Pro-129–Gln-210, Ile-214–Thr-309, His-331–Ala-403, and Pro-416–Val-524. Residues Leu-33–Val-532 are Extracellular-facing. N-linked (GlcNAc...) asparagine glycans are attached at residues Asn-45 and Asn-89. 2 disulfide bridges follow: Cys-54–Cys-100 and Cys-149–Cys-190. Residues Asn-215 and Asn-230 are each glycosylated (N-linked (GlcNAc...) asparagine). A disulfide bond links Cys-235 and Cys-291. 6 N-linked (GlcNAc...) asparagine glycosylation sites follow: Asn-292, Asn-307, Asn-354, Asn-371, Asn-468, and Asn-479. Cysteines 436 and 508 form a disulfide. The chain crosses the membrane as a helical span at residues Val-533–Ile-553. Residues Met-554 to Leu-1103 lie on the Cytoplasmic side of the membrane. A phosphotyrosine; by autocatalysis mark is found at Tyr-562, Tyr-579, and Tyr-581. The Protein kinase domain occupies Leu-600–Leu-962. ATP is bound by residues Leu-606–Val-614 and Lys-634. Tyr-686 is modified (phosphotyrosine; by ABL1 and ABL2). Tyr-716, Tyr-740, Tyr-751, Tyr-763, Tyr-771, Tyr-775, and Tyr-778 each carry phosphotyrosine; by autocatalysis. Asp-826 serves as the catalytic Proton acceptor. Residue Tyr-857 is modified to Phosphotyrosine; by autocatalysis. 2 positions are modified to phosphotyrosine; by ABL1 and ABL2: Tyr-934 and Tyr-970. A phosphotyrosine; by autocatalysis mark is found at Tyr-1009 and Tyr-1021. The disordered stretch occupies residues Gly-1017 to Leu-1103. Over residues Ser-1039–Cys-1059 the composition is skewed to polar residues. Residues Pro-1065–Pro-1075 show a composition bias toward acidic residues. Residues Gln-1076 to Pro-1086 are compositionally biased toward pro residues.

It belongs to the protein kinase superfamily. Tyr protein kinase family. CSF-1/PDGF receptor subfamily. In terms of assembly, interacts with homodimeric PDGFB and PDGFD, and with heterodimers formed by PDGFA and PDGFB. May also interact with homodimeric PDGFC. Monomer in the absence of bound ligand. Interaction with homodimeric PDGFB, heterodimers formed by PDGFA and PDGFB or homodimeric PDGFD, leads to receptor dimerization, where both PDGFRA homodimers and heterodimers with PDGFRB are observed. Interacts with SH2B2/APS. Interacts directly (tyrosine phosphorylated) with SHB. Interacts (tyrosine phosphorylated) with PIK3R1 and RASA1. Interacts (tyrosine phosphorylated) with CBL. Interacts (tyrosine phosphorylated) with SRC and SRC family kinases. Interacts (tyrosine phosphorylated) with PIK3C2B, maybe indirectly. Interacts (tyrosine phosphorylated) with SHC1, GRB7, GRB10 and NCK1. Interaction with GRB2 is mediated by SHC1. Interacts (via C-terminus) with NHERF1. N-glycosylated. In terms of processing, ubiquitinated. After autophosphorylation, the receptor is polyubiquitinated, leading to its degradation. Post-translationally, autophosphorylated on tyrosine residues upon ligand binding. Autophosphorylation occurs in trans, i.e. one subunit of the dimeric receptor phosphorylates tyrosine residues on the other subunit. Phosphorylation at Tyr-579, and to a lesser degree, Tyr-581 is important for interaction with SRC. Phosphorylation at Tyr-716 is important for interaction with GRB2. Phosphorylation at Tyr-740 and Tyr-751 is important for interaction with PIK3R1. Phosphorylation at Tyr-751 is important for interaction with NCK1. Phosphorylation at Tyr-771 and Tyr-857 is important for interaction with RASA1/GAP. Phosphorylation at Tyr-857 is important for efficient phosphorylation of PLCG1 and PTPN11, resulting in increased phosphorylation of AKT1, MAPK1/ERK2 and/or MAPK3/ERK1, PDCD6IP/ALIX and STAM, and in increased cell proliferation. Phosphorylation at Tyr-1009 is important for interaction with PTPN11. Phosphorylation at Tyr-1009 and Tyr-1021 is important for interaction with PLCG1. Dephosphorylated by PTPRJ at Tyr-751, Tyr-857, Tyr-1009 and Tyr-1021. Dephosphorylated by PTPN2 at Tyr-579 and Tyr-1021.

The protein resides in the cell membrane. Its subcellular location is the cytoplasmic vesicle. It localises to the lysosome lumen. It carries out the reaction L-tyrosyl-[protein] + ATP = O-phospho-L-tyrosyl-[protein] + ADP + H(+). Present in an inactive conformation in the absence of bound ligand. Binding of PDGFB and/or PDGFD leads to dimerization and activation by autophosphorylation on tyrosine residues. In terms of biological role, tyrosine-protein kinase that acts as a cell-surface receptor for homodimeric PDGFB and PDGFD and for heterodimers formed by PDGFA and PDGFB, and plays an essential role in the regulation of embryonic development, cell proliferation, survival, differentiation, chemotaxis and migration. Plays an essential role in blood vessel development by promoting proliferation, migration and recruitment of pericytes and smooth muscle cells to endothelial cells. Plays a role in the migration of vascular smooth muscle cells and the formation of neointima at vascular injury sites. Required for normal development of the cardiovascular system. Required for normal recruitment of pericytes (mesangial cells) in the kidney glomerulus, and for normal formation of a branched network of capillaries in kidney glomeruli. Promotes rearrangement of the actin cytoskeleton and the formation of membrane ruffles. Binding of its cognate ligands - homodimeric PDGFB, heterodimers formed by PDGFA and PDGFB or homodimeric PDGFD -leads to the activation of several signaling cascades; the response depends on the nature of the bound ligand and is modulated by the formation of heterodimers between PDGFRA and PDGFRB. Phosphorylates PLCG1, PIK3R1, PTPN11, RASA1/GAP, CBL, SHC1 and NCK1. Activation of PLCG1 leads to the production of the cellular signaling molecules diacylglycerol and inositol 1,4,5-trisphosphate, mobilization of cytosolic Ca(2+) and the activation of protein kinase C. Phosphorylation of PIK3R1, the regulatory subunit of phosphatidylinositol 3-kinase, leads to the activation of the AKT1 signaling pathway. Phosphorylation of SHC1, or of the C-terminus of PTPN11, creates a binding site for GRB2, resulting in the activation of HRAS, RAF1 and down-stream MAP kinases, including MAPK1/ERK2 and/or MAPK3/ERK1. Promotes phosphorylation and activation of SRC family kinases. Promotes phosphorylation of PDCD6IP/ALIX and STAM. Receptor signaling is down-regulated by protein phosphatases that dephosphorylate the receptor and its down-stream effectors, and by rapid internalization of the activated receptor. In Canis lupus familiaris (Dog), this protein is Platelet-derived growth factor receptor beta (PDGFRB).